A 721-amino-acid chain; its full sequence is Polyribonucleotide nucleotidyltransferase (721 aa).

Mg(2+) is bound by residues D495 and D501. Residues 562–621 (PRLLSFRIDPELIGTVIGPGGRTIKGITERTNTKIDIEDGGIVTIASHDGAAAEEAQKII) enclose the KH domain. The region spanning 631 to 699 (GEIFPGVVTR…SRGRINLTLR (69 aa)) is the S1 motif domain. The tract at residues 702–721 (GQNGGMSYPEPTPTPVAPLS) is disordered. The segment covering 711-721 (EPTPTPVAPLS) has biased composition (pro residues).

This sequence belongs to the polyribonucleotide nucleotidyltransferase family. Mg(2+) is required as a cofactor.

It is found in the cytoplasm. It carries out the reaction RNA(n+1) + phosphate = RNA(n) + a ribonucleoside 5'-diphosphate. Its function is as follows. Involved in mRNA degradation. Catalyzes the phosphorolysis of single-stranded polyribonucleotides processively in the 3'- to 5'-direction. This chain is Polyribonucleotide nucleotidyltransferase, found in Prochlorococcus marinus (strain MIT 9301).